A 119-amino-acid chain; its full sequence is Large ribosomal subunit protein bL17 (119 aa).

This sequence belongs to the bacterial ribosomal protein bL17 family. As to quaternary structure, part of the 50S ribosomal subunit. Contacts protein L32.

The protein is Large ribosomal subunit protein bL17 of Malacoplasma penetrans (strain HF-2) (Mycoplasma penetrans).